The sequence spans 86 residues: Neurotoxin 3FTx-RK (86 aa).

A signal peptide spans 1 to 21 (MKTLLLTLVVVTIVCLELGYT). 4 cysteine pairs are disulfide-bonded: cysteine 24/cysteine 45, cysteine 38/cysteine 63, cysteine 67/cysteine 78, and cysteine 79/cysteine 84.

In terms of tissue distribution, expressed by the venom gland.

It is found in the secreted. This chain is Neurotoxin 3FTx-RK, found in Bungarus fasciatus (Banded krait).